The following is a 402-amino-acid chain: Formate-dependent phosphoribosylglycinamide formyltransferase (402 aa).

Residues 23 to 24 (EL) and Glu-83 contribute to the N(1)-(5-phospho-beta-D-ribosyl)glycinamide site. Residues Arg-116, Lys-157, 162 to 167 (SSGKGQ), 197 to 200 (ESQI), and Glu-205 contribute to the ATP site. Residues 121–316 (RLAAEELGLP…EFELHARAIL (196 aa)) enclose the ATP-grasp domain. Mg(2+) contacts are provided by Glu-275 and Glu-287. Residues Asp-294, Lys-363, and 370-371 (RR) contribute to the N(1)-(5-phospho-beta-D-ribosyl)glycinamide site.

It belongs to the PurK/PurT family. As to quaternary structure, homodimer.

The catalysed reaction is N(1)-(5-phospho-beta-D-ribosyl)glycinamide + formate + ATP = N(2)-formyl-N(1)-(5-phospho-beta-D-ribosyl)glycinamide + ADP + phosphate + H(+). It functions in the pathway purine metabolism; IMP biosynthesis via de novo pathway; N(2)-formyl-N(1)-(5-phospho-D-ribosyl)glycinamide from N(1)-(5-phospho-D-ribosyl)glycinamide (formate route): step 1/1. Functionally, involved in the de novo purine biosynthesis. Catalyzes the transfer of formate to 5-phospho-ribosyl-glycinamide (GAR), producing 5-phospho-ribosyl-N-formylglycinamide (FGAR). Formate is provided by PurU via hydrolysis of 10-formyl-tetrahydrofolate. This Acinetobacter baumannii (strain ATCC 17978 / DSM 105126 / CIP 53.77 / LMG 1025 / NCDC KC755 / 5377) protein is Formate-dependent phosphoribosylglycinamide formyltransferase.